The following is a 169-amino-acid chain: Putative cysteine protease YraA (169 aa).

In terms of domain architecture, PfpI endopeptidase spans 3–169 (KKIAVLVTDQ…FNRESLNLLK (167 aa)). Residue Cys-103 is the Nucleophile of the active site. Residue His-104 is part of the active site.

It belongs to the peptidase C56 family.

Its function is as follows. Functions in the protection against aldehyde-stress, possibly by degrading damaged proteins. In Bacillus subtilis (strain 168), this protein is Putative cysteine protease YraA (yraA).